The primary structure comprises 160 residues: Cytochrome b6-f complex subunit 4 (160 aa).

The next 3 helical transmembrane spans lie at 36–56 (LLYI…GLAV), 95–115 (LLGV…PFLE), and 131–151 (TVFL…ALPI).

It belongs to the cytochrome b family. PetD subfamily. In terms of assembly, the 4 large subunits of the cytochrome b6-f complex are cytochrome b6, subunit IV (17 kDa polypeptide, petD), cytochrome f and the Rieske protein, while the 4 small subunits are petG, petL, petM and petN. The complex functions as a dimer.

Its subcellular location is the plastid. It is found in the chloroplast thylakoid membrane. Functionally, component of the cytochrome b6-f complex, which mediates electron transfer between photosystem II (PSII) and photosystem I (PSI), cyclic electron flow around PSI, and state transitions. This Physcomitrium patens (Spreading-leaved earth moss) protein is Cytochrome b6-f complex subunit 4.